Reading from the N-terminus, the 265-residue chain is Apolipoprotein A-I (265 aa).

The signal sequence occupies residues 1 to 18; the sequence is MKAVVLTLAVLFLTGSQA. A run of 2 repeats spans residues 67–88 and 89–110. Residues 67 to 265 are 10 X approximate tandem repeats; that stretch reads LKLLDNWDSL…DEASKKLNAQ (199 aa). Met109 carries the post-translational modification Methionine sulfoxide. One copy of the 3; half-length repeat lies at 111–121; that stretch reads KDLQEVKQKVQ. 5 consecutive repeat copies span residues 122-142, 144-165, 166-187, 188-209, and 210-230. The stretch at 231–241 is one 9; half-length repeat; the sequence is PALEDLRQGLL. Copy 10 of the repeat occupies 242 to 265; it reads PVLENLKVSILAAIDEASKKLNAQ.

The protein belongs to the apolipoprotein A1/A4/E family. In terms of assembly, homodimer. Interacts with APOA1BP and CLU. Component of a sperm activating protein complex (SPAP), consisting of APOA1, an immunoglobulin heavy chain, an immunoglobulin light chain and albumin. Interacts with NDRG1. Interacts with SCGB3A2. Interacts with NAXE and YJEFN3. Glycosylated. In terms of processing, palmitoylated. Post-translationally, phosphorylation sites are present in the extracellular medium. Major protein of plasma HDL, also found in chylomicrons.

Its subcellular location is the secreted. Functionally, participates in the reverse transport of cholesterol from tissues to the liver for excretion by promoting cholesterol efflux from tissues and by acting as a cofactor for the lecithin cholesterol acyltransferase (LCAT). As part of the SPAP complex, activates spermatozoa motility. This chain is Apolipoprotein A-I (APOA1), found in Balaenoptera acutorostrata scammoni (North Pacific minke whale).